The primary structure comprises 375 residues: 2-oxoglutarate synthase subunit KorA (375 aa).

Heterotetramer of the KorA, KorB, KorC and KorD subunits.

The catalysed reaction is 2 oxidized [2Fe-2S]-[ferredoxin] + 2-oxoglutarate + CoA = succinyl-CoA + 2 reduced [2Fe-2S]-[ferredoxin] + CO2 + H(+). This Methanothermobacter marburgensis (strain ATCC BAA-927 / DSM 2133 / JCM 14651 / NBRC 100331 / OCM 82 / Marburg) (Methanobacterium thermoautotrophicum) protein is 2-oxoglutarate synthase subunit KorA (korA).